The primary structure comprises 239 residues: mRNA turnover protein 4 homolog (239 aa).

The interval 215–239 (FQQMGDDLPESASESTEESDSEDDD) is disordered. Residues S225, S229, and S233 each carry the phosphoserine modification. The span at 229-239 (STEESDSEDDD) shows a compositional bias: acidic residues.

This sequence belongs to the universal ribosomal protein uL10 family. In terms of assembly, associates with the pre-60S ribosomal particle. Interacts with MINAS-60 (product of an alternative open reading frame of RBM10).

The protein resides in the nucleus. It is found in the nucleolus. It localises to the cytoplasm. In terms of biological role, component of the ribosome assembly machinery. Nuclear paralog of the ribosomal protein P0, it binds pre-60S subunits at an early stage of assembly in the nucleolus, and is replaced by P0 in cytoplasmic pre-60S subunits and mature 80S ribosomes. This Homo sapiens (Human) protein is mRNA turnover protein 4 homolog (MRTO4).